A 204-amino-acid chain; its full sequence is Recombination protein RecR (204 aa).

The C4-type zinc-finger motif lies at 61–76; that stretch reads CARCNTFSETQICSTC. The region spanning 84–183 is the Toprim domain; the sequence is SLLCIVETPA…KVTRIARGIP (100 aa).

Belongs to the RecR family.

Its function is as follows. May play a role in DNA repair. It seems to be involved in an RecBC-independent recombinational process of DNA repair. It may act with RecF and RecO. The sequence is that of Recombination protein RecR from Polynucleobacter asymbioticus (strain DSM 18221 / CIP 109841 / QLW-P1DMWA-1) (Polynucleobacter necessarius subsp. asymbioticus).